The primary structure comprises 142 residues: Fluoride-specific ion channel FluC 1 (142 aa).

4 consecutive transmembrane segments (helical) span residues 23-43 (VNIA…YLID), 54-74 (LPLG…GLIG), 79-99 (GWLL…FSTF), and 116-136 (LGNV…AVSL). Positions 91 and 94 each coordinate Na(+).

The protein belongs to the fluoride channel Fluc/FEX (TC 1.A.43) family.

The protein localises to the cell membrane. It catalyses the reaction fluoride(in) = fluoride(out). With respect to regulation, na(+) is not transported, but it plays an essential structural role and its presence is essential for fluoride channel function. Fluoride-specific ion channel. Important for reducing fluoride concentration in the cell, thus reducing its toxicity. The chain is Fluoride-specific ion channel FluC 1 from Nocardia farcinica (strain IFM 10152).